Here is an 80-residue protein sequence, read N- to C-terminus: U-Asilidin(1)-Dg12 (80 aa).

Residues 1 to 24 form the signal peptide; sequence MARLLVVSVGVFLAVIMLSSETMS. A propeptide spanning residues 25-46 is cleaved from the precursor; that stretch reads LPAGENLPALTLFEAQNQLIGL. 3 cysteine pairs are disulfide-bonded: cysteine 53–cysteine 67, cysteine 60–cysteine 71, and cysteine 66–cysteine 78.

Belongs to the asilidin-1 family. Expressed by the venom gland.

It is found in the secreted. Functionally, neurotoxin that may modulate ions channels (other than those tested). In vivo, induces neurotoxic effects when injected into insects (tested on L.cuprina and A.domesticus). This Dolopus genitalis (Giant Australian assassin fly) protein is U-Asilidin(1)-Dg12.